A 233-amino-acid chain; its full sequence is uncharacterized protein (233 aa).

6 helical membrane passes run 7–27 (VPIF…LLAY), 36–56 (YEFE…ILIP), 62–82 (MFVL…KYLA), 119–139 (LIIA…AILM), 159–179 (PLYP…VGLV), and 188–208 (ILLA…APHI).

Its subcellular location is the cell membrane. This is an uncharacterized protein from Methanocaldococcus jannaschii (strain ATCC 43067 / DSM 2661 / JAL-1 / JCM 10045 / NBRC 100440) (Methanococcus jannaschii).